The primary structure comprises 191 residues: C-type lectin domain family 2 member D (191 aa).

At Met-1 to Leu-38 the chain is on the cytoplasmic side. The helical; Signal-anchor for type II membrane protein transmembrane segment at Phe-39 to Ile-59 threads the bilayer. Residues Arg-60–Val-191 are Extracellular-facing. An intrachain disulfide couples Cys-75 to Cys-86. The C-type lectin domain maps to Phe-82–Ser-185. Asn-95 and Asn-147 each carry an N-linked (GlcNAc...) asparagine glycan. The cysteines at positions 103 and 184 are disulfide-linked.

In terms of assembly, homodimer; disulfide-linked. In terms of processing, N-glycosylated. In terms of tissue distribution, detected in peripheral blood leukocytes, osteoblasts, lymph node, thymus and spleen. Isoform 1, isoform 2 and isoform 4 are expressed in T- and B-lymphocytes, and at lower levels in NK cells. They are also expressed in B-cell lines and LPS-matured monocyte-derived dendritic cells.

It localises to the cell membrane. It is found in the endoplasmic reticulum. Receptor for KLRB1 that protects target cells against natural killer cell-mediated lysis. Inhibits osteoclast formation. Inhibits bone resorption. Modulates the release of interferon-gamma. Binds high molecular weight sulfated glycosaminoglycans. In Homo sapiens (Human), this protein is C-type lectin domain family 2 member D (CLEC2D).